Reading from the N-terminus, the 462-residue chain is NEDD8-activating enzyme E1 catalytic subunit (462 aa).

Position 2 is an N-acetylalanine (alanine 2). The interaction with UBE2M N-terminus stretch occupies residues 53-70 (HPDFEPSTESLQFLLDTC). ATP is bound by residues 100–124 (DMDTIDVSNLNRQFLFRPKDVGRPK) and 148–171 (IQDFNDTFYRQFHIIVCGLDSIIA). Interaction with UBE2M N-terminus regions lie at residues 157–161 (RQFHI) and 192–217 (PSSIVPLIDGGTEGFKGNARVILPGM). The tract at residues 227-229 (LYP) is interaction with NEDD8. Cysteine 237 acts as the Glycyl thioester intermediate in catalysis. Interaction with NAE1 stretches follow at residues 242 to 248 (MPRLPEH) and 292 to 295 (YNIR). Positions 331–338 (IATSAYIP) are interaction with UBE2M N-terminus. The tract at residues 352–357 (YTYTFE) is interaction with NEDD8. Residues 368–462 (SQLPQNIQFS…QTVLFKLHFT (95 aa)) form an interaction with UBE2M core domain region.

Belongs to the ubiquitin-activating E1 family. UBA3 subfamily. Heterodimer of UBA3 and NAE1. Interacts with NEDD8, UBE2F and UBE2M. Binds ESR1 and ESR2 with bound steroid ligand. Interacts with TBATA. In terms of tissue distribution, ubiquitously expressed.

It catalyses the reaction ATP + [NEDD8 protein] + [E1 NEDD8-activating enzyme]-L-cysteine = AMP + diphosphate + [E1 NEDD8-activating enzyme]-S-[NEDD8 protein]-yl-L-cysteine.. The protein operates within protein modification; protein neddylation. Binding of TP53BP2 to the regulatory subunit NAE1 decreases activity. Catalytic subunit of the dimeric UBA3-NAE1 E1 enzyme. E1 activates NEDD8 by first adenylating its C-terminal glycine residue with ATP, thereafter linking this residue to the side chain of the catalytic cysteine, yielding a NEDD8-UBA3 thioester and free AMP. E1 finally transfers NEDD8 to the catalytic cysteine of UBE2M. Down-regulates steroid receptor activity. Necessary for cell cycle progression. This is NEDD8-activating enzyme E1 catalytic subunit (Uba3) from Rattus norvegicus (Rat).